A 419-amino-acid polypeptide reads, in one-letter code: Acyl-coenzyme A thioesterase 1 (419 aa).

Catalysis depends on charge relay system residues Ser232, Asp324, and His358. Ser416 bears the Phosphoserine mark.

This sequence belongs to the C/M/P thioester hydrolase family. In terms of assembly, monomer. As to expression, expressed in heart, kidney, brown adipose tissue, white adipose tissue, adrenal gland and muscle.

It localises to the cytoplasm. The protein resides in the cytosol. The enzyme catalyses hexadecanoyl-CoA + H2O = hexadecanoate + CoA + H(+). It carries out the reaction decanoyl-CoA + H2O = decanoate + CoA + H(+). It catalyses the reaction dodecanoyl-CoA + H2O = dodecanoate + CoA + H(+). The catalysed reaction is tetradecanoyl-CoA + H2O = tetradecanoate + CoA + H(+). The enzyme catalyses octadecanoyl-CoA + H2O = octadecanoate + CoA + H(+). It carries out the reaction eicosanoyl-CoA + H2O = eicosanoate + CoA + H(+). It catalyses the reaction (9Z)-octadecenoyl-CoA + H2O = (9Z)-octadecenoate + CoA + H(+). The catalysed reaction is (9Z)-hexadecenoyl-CoA + H2O = (9Z)-hexadecenoate + CoA + H(+). The enzyme catalyses (9E)-octadecenoyl-CoA + H2O = (9E)-octadecenoate + CoA + H(+). Its pathway is lipid metabolism; fatty acid metabolism. Catalyzes the hydrolysis of acyl-CoAs into free fatty acids and coenzyme A (CoASH), regulating their respective intracellular levels. More active towards saturated and unsaturated long chain fatty acyl-CoAs (C12-C20). The chain is Acyl-coenzyme A thioesterase 1 (Acot1) from Mus musculus (Mouse).